The primary structure comprises 127 residues: Cytochrome c' (127 aa).

The residue at position 1 (Q1) is a Pyrrolidone carboxylic acid. Residues R12, Q13, D67, C116, C119, and H120 each contribute to the heme c site.

In terms of assembly, homodimer. Binds 1 heme c group covalently per subunit.

The protein resides in the periplasm. Cytochrome c' is the most widely occurring bacterial c-type cytochrome. Cytochromes c' are high-spin proteins and the heme has no sixth ligand. Their exact function is not known. The polypeptide is Cytochrome c' (Alcaligenes xylosoxydans xylosoxydans (Achromobacter xylosoxidans)).